The sequence spans 138 residues: MAVLPDKEKLLRNFTRCANWEEKYLYIIELGQRLAELNPQDRNPQNTIHGCQSQVWIVMRRNANGIIELQGDSDAAIVKGLMAVVFILYHQMTAQDIVHFDVRPWFEKMALAQHLTPSRSQGLEAMIRAIRAKAATLS.

Cys51 (cysteine persulfide intermediate) is an active-site residue.

Belongs to the SufE family. Homodimer. Interacts with SufS.

It localises to the cytoplasm. The protein operates within cofactor biosynthesis; iron-sulfur cluster biosynthesis. Participates in cysteine desulfuration mediated by SufS. Cysteine desulfuration mobilizes sulfur from L-cysteine to yield L-alanine and constitutes an essential step in sulfur metabolism for biosynthesis of a variety of sulfur-containing biomolecules. Functions as a sulfur acceptor for SufS, by mediating the direct transfer of the sulfur atom from the S-sulfanylcysteine of SufS, an intermediate product of cysteine desulfuration process. The sequence is that of Cysteine desulfuration protein SufE from Salmonella choleraesuis (strain SC-B67).